Consider the following 248-residue polypeptide: uncharacterized protein (248 aa).

This is an uncharacterized protein from Escherichia coli (Bacteriophage T4).